An 865-amino-acid chain; its full sequence is AP-1 complex subunit gamma-1 (865 aa).

The interval 665-690 (AEPLETPVDEMTQSPQSSLSRAPSTS) is disordered. Positions 675–690 (MTQSPQSSLSRAPSTS) are enriched in polar residues. The 115-residue stretch at 746–860 (KSYPPIVVFD…LDQVDFGKLP (115 aa)) folds into the GAE domain.

This sequence belongs to the adaptor complexes large subunit family. As to quaternary structure, adaptor protein complex 1 (AP-1) is a heterotetramer composed of two large adaptins (gamma-type subunit apl4 and beta-type subunit apl2), a medium adaptin (mu-type subunit apm1) and a small adaptin (sigma-type subunit aps1). AP-1 interacts with clathrin.

The protein localises to the cytoplasmic vesicle. It localises to the clathrin-coated vesicle membrane. It is found in the golgi apparatus. Functionally, adaptins are components of the adaptor complexes which link clathrin to receptors in coated vesicles. Clathrin-associated protein complexes are believed to interact with the cytoplasmic tails of membrane proteins, leading to their selection and concentration. The AP-1 complex interacts directly with clathrin. The chain is AP-1 complex subunit gamma-1 (apl4) from Schizosaccharomyces pombe (strain 972 / ATCC 24843) (Fission yeast).